The following is a 79-amino-acid chain: Mycoredoxin 1 (79 aa).

Residues 1–79 (MSNVTIYATD…EVIAKIEALA (79 aa)) enclose the Glutaredoxin domain.

It belongs to the glutaredoxin family.

The protein resides in the cytoplasm. It catalyses the reaction [mycoredoxin]-L-cysteine + arseno-mycothiol + H(+) = [mycoredoxin]-S-mycothiol-L-cysteine + arsenite. Involved in defense against toxic arsenate. Involved in the mycothiol/myoredoxin redox pathway which uses a mycothioltransferase mechanism; functions as a monothiol mixed disulfide reductase and is recycled by a second mycothiol forming mycothione which in turn is reduced in a NADPH-dependent manner. The sequence is that of Mycoredoxin 1 (mrx1) from Corynebacterium glutamicum (strain ATCC 13032 / K051).